A 944-amino-acid chain; its full sequence is DNA ligase 4 (944 aa).

Residues Glu-280, Lys-282, Arg-287, Glu-340, Phe-382, Glu-442, Lys-447, Lys-464, and Lys-466 each contribute to the ATP site. Lys-282 serves as the catalytic N6-AMP-lysine intermediate. Glu-340 contacts Mg(2+). Glu-442 lines the Mg(2+) pocket. BRCT domains follow at residues 681-780 and 836-941; these read PISN…PNYC and FPLF…DFPV.

It belongs to the ATP-dependent DNA ligase family. Component of the DNA ligase IV complex, composed of DNL4, LIF1 and NEJ1. Interacts (via BRCT domain) with LIF1. Interacts with NEJ1. Interacts with POL4 in the DNL4-LIF1 complex. It depends on Mg(2+) as a cofactor.

The protein resides in the nucleus. It carries out the reaction ATP + (deoxyribonucleotide)n-3'-hydroxyl + 5'-phospho-(deoxyribonucleotide)m = (deoxyribonucleotide)n+m + AMP + diphosphate.. Functionally, DNA ligase involved in DNA non-homologous end joining (NHEJ); required for double-strand break (DSB) repair. The protein is DNA ligase 4 (DNL4) of Saccharomyces cerevisiae (strain ATCC 204508 / S288c) (Baker's yeast).